We begin with the raw amino-acid sequence, 199 residues long: Auxin-responsive protein IAA1 (199 aa).

The short motif at 25–29 (LTLRL) is the EAR-like (transcriptional repression) element. Residues 31-74 (GSLAAAAAPDPDRKRSSPSSSDAADAADNSSPLAAAADAPPAPK) form a disordered region. Positions 47 to 69 (SPSSSDAADAADNSSPLAAAADA) are enriched in low complexity. The PB1 domain occupies 93 to 187 (AKFVKVAVDG…TCQRLRLMKS (95 aa)).

It belongs to the Aux/IAA family. Homodimers and heterodimers. Highly expressed in flowers. Expressed at low levels in roots and shoots.

It localises to the nucleus. Its function is as follows. Aux/IAA proteins are short-lived transcriptional factors that function as repressors of early auxin response genes at low auxin concentrations. The polypeptide is Auxin-responsive protein IAA1 (IAA1) (Oryza sativa subsp. japonica (Rice)).